Consider the following 97-residue polypeptide: MFKVKMIVSGRVQGVGFRYFVIISARELGILGRVWNNDDGTVEILAQTEDEKKLEEFTAIVRGEKSSKGRLSPFAKVTDVKSSPANFPDFTDFNIKY.

The Acylphosphatase-like domain occupies 3–97 (KVKMIVSGRV…PDFTDFNIKY (95 aa)). Catalysis depends on residues R18 and N36.

This sequence belongs to the acylphosphatase family.

It catalyses the reaction an acyl phosphate + H2O = a carboxylate + phosphate + H(+). This chain is Acylphosphatase (acyP), found in Lactococcus lactis subsp. lactis (strain IL1403) (Streptococcus lactis).